The chain runs to 183 residues: UPF0098 protein YbcL (183 aa).

Positions 1–21 (MKTLIVSTVLAFITFSAQAAA) are cleaved as a signal peptide. A disulfide bridge connects residues Cys-46 and Cys-129.

This sequence belongs to the UPF0098 family. As to quaternary structure, homodimer.

Its subcellular location is the periplasm. This chain is UPF0098 protein YbcL (ybcL), found in Escherichia coli (strain K12).